A 917-amino-acid chain; its full sequence is ABC transporter A family member 12 (917 aa).

A run of 6 helical transmembrane segments spans residues 34–54 (LILVPLFLCLILLAIQQVLDA), 323–343 (IASLLGPLFFTWVVLLLFPVI), 377–397 (FLTISMLYVISLVGFGSAIGL), 409–429 (FVFYFIYSNLQISLAFLVSSI), 435–455 (TVTVIAYILVYGTGLLGSFLF), and 508–528 (GEVFCIMSVEWFLALIVAYYI). One can recognise an ABC transporter domain in the interval 595–832 (ILCDNLKKVY…YGGSYVFTMT (238 aa)). ATP is bound at residue 633 to 640 (GPNGAGKT).

This sequence belongs to the ABC transporter superfamily. ABCA family. CPR flippase (TC 3.A.1.211) subfamily.

It localises to the membrane. The protein is ABC transporter A family member 12 (ABCA12) of Arabidopsis thaliana (Mouse-ear cress).